We begin with the raw amino-acid sequence, 328 residues long: tRNA uridine(34) hydroxylase (328 aa).

One can recognise a Rhodanese domain in the interval 130–224; that stretch reads LDKDTVVLDT…YGKDPEVQGE (95 aa). Cys-184 acts as the Cysteine persulfide intermediate in catalysis.

It belongs to the TrhO family.

The enzyme catalyses uridine(34) in tRNA + AH2 + O2 = 5-hydroxyuridine(34) in tRNA + A + H2O. Its function is as follows. Catalyzes oxygen-dependent 5-hydroxyuridine (ho5U) modification at position 34 in tRNAs. In Streptococcus pneumoniae (strain Taiwan19F-14), this protein is tRNA uridine(34) hydroxylase.